The chain runs to 114 residues: Fluoride-specific ion channel FluC 1 (114 aa).

4 helical membrane passes run 3 to 23 (IDIK…GALF), 30 to 50 (IFIV…LNIL), 55 to 75 (LTLC…MSHL), and 87 to 107 (FLLN…LGHI). Residues Gly-63 and Thr-66 each contribute to the Na(+) site.

Belongs to the fluoride channel Fluc/FEX (TC 1.A.43) family.

Its subcellular location is the cell inner membrane. It catalyses the reaction fluoride(in) = fluoride(out). Na(+) is not transported, but it plays an essential structural role and its presence is essential for fluoride channel function. Functionally, fluoride-specific ion channel. Important for reducing fluoride concentration in the cell, thus reducing its toxicity. The protein is Fluoride-specific ion channel FluC 1 of Prochlorococcus marinus (strain NATL2A).